Reading from the N-terminus, the 211-residue chain is Ras-related protein Rab-38 (211 aa).

Residues Gly19, Val20, Gly21, Lys22, Thr23, Ser24, Ser35, Ser36, Tyr38, and Thr41 each coordinate GTP. Thr23 is a Mg(2+) binding site. The Switch 1 motif lies at Gln32–Phe46. Positions 41 and 65 each coordinate Mg(2+). GTP contacts are provided by Gly68, Lys128, Asp130, Ala160, and Lys161. The Switch 2 motif lies at Gly68 to Arg81. The S-palmitoyl cysteine moiety is linked to residue Cys205. Cys208 carries the S-geranylgeranyl cysteine lipid modification.

This sequence belongs to the small GTPase superfamily. Rab family. In terms of assembly, interacts with ANKRD27. The cofactor is Mg(2+). In terms of processing, although at least one in vitro system can process and methylate the prenylated C-terminal, in an in vitro system that normally express Rab-38 and in vivo the prenylated C-terminal is not proteolytically processed and not methylated. Expressed in melanocytes.

Its subcellular location is the cell membrane. It localises to the melanosome. It is found in the cytoplasmic vesicle. The protein localises to the phagosome. The protein resides in the phagosome membrane. Its subcellular location is the melanosome membrane. The catalysed reaction is GTP + H2O = GDP + phosphate + H(+). Regulated by guanine nucleotide exchange factors (GEFs) including the BLOC-3 complex composed of HPS1 and HPS4 which promote the exchange of bound GDP for free GTP. Regulated by GTPase activating proteins (GAPs) including SGSM2 which increase the GTP hydrolysis activity. Inhibited by GDP dissociation inhibitors (GDIs). Functionally, the small GTPases Rab are key regulators of intracellular membrane trafficking, from the formation of transport vesicles to their fusion with membranes. Rabs cycle between an inactive GDP-bound form and an active GTP-bound form that is able to recruit to membranes different sets of downstream effectors directly responsible for vesicle formation, movement, tethering and fusion. RAB38 may be involved in melanosomal transport and docking. Involved in the proper sorting of TYRP1. Involved in peripheral melanosomal distribution of TYRP1 in melanocytes; the function, which probably is implicating vesicle-trafficking, includes cooperation with ANKRD27 and VAMP7. Plays a role in the maturation of phagosomes that engulf pathogens, such as S.aureus and M.tuberculosis. Plays an important role in the control of melanin production and melanosome biogenesis. In concert with RAB32, regulates the proper trafficking of melanogenic enzymes TYR, TYRP1 and DCT/TYRP2 to melanosomes in melanocytes. In Homo sapiens (Human), this protein is Ras-related protein Rab-38.